The following is a 199-amino-acid chain: Protein PPP1R35 homolog (199 aa).

The segment covering Met1–Ala11 has biased composition (basic residues). Disordered stretches follow at residues Met1–Val23 and Glu36–Asn60. Residues Cys38–Asp49 show a composition bias toward polar residues.

Belongs to the PPP1R35 family. As to quaternary structure, interacts with Ana3; this complex is recruited to daughter centrioles before their conversion to centrosomes.

Its subcellular location is the cytoplasm. The protein localises to the cytoskeleton. It is found in the microtubule organizing center. It localises to the centrosome. The protein resides in the centriole. Its function is as follows. Participates in the later stages of centriole assembly through the interaction with Ana3 leading to the centriole to centrosome conversion in somatic cells. This chain is Protein PPP1R35 homolog, found in Drosophila melanogaster (Fruit fly).